Consider the following 277-residue polypeptide: Undecaprenyl-diphosphatase (277 aa).

Helical transmembrane passes span 19 to 39, 44 to 64, 89 to 109, 122 to 142, 154 to 174, 195 to 215, 224 to 244, and 257 to 277; these read FLPV…PFYG, FDDL…LFLY, FHFL…GFIA, LLEI…VAEW, IGFK…IPGM, AEFS…YKLI, NTIP…TLVI, and SVFG…TKLI.

Belongs to the UppP family.

The protein localises to the cell inner membrane. It catalyses the reaction di-trans,octa-cis-undecaprenyl diphosphate + H2O = di-trans,octa-cis-undecaprenyl phosphate + phosphate + H(+). Functionally, catalyzes the dephosphorylation of undecaprenyl diphosphate (UPP). Confers resistance to bacitracin. The chain is Undecaprenyl-diphosphatase from Leptospira interrogans serogroup Icterohaemorrhagiae serovar copenhageni (strain Fiocruz L1-130).